The primary structure comprises 849 residues: Cytosolic phospholipase A2 zeta (849 aa).

One can recognise a C2 domain in the interval 27–145 (EKRGPLWRHW…KCGQPHKHTF (119 aa)). Ca(2+) is bound by residues D60, D66, D116, D118, and D123. Residues 306–849 (EMSSGDLDLR…RHQARERAGA (544 aa)) form the PLA2c domain. Residue S395 is the Nucleophile of the active site. Residue D680 is the Proton acceptor of the active site.

The cofactor is Ca(2+). Expressed in myocardium (at protein level).

Its subcellular location is the cytoplasm. It localises to the cytosol. It is found in the cell membrane. The protein localises to the mitochondrion. It catalyses the reaction a 1,2-diacyl-sn-glycero-3-phosphocholine + H2O = a 1-acyl-sn-glycero-3-phosphocholine + a fatty acid + H(+). The enzyme catalyses a 1-O-alkyl-2-acyl-sn-glycero-3-phosphocholine + H2O = a 1-O-alkyl-sn-glycero-3-phosphocholine + a fatty acid + H(+). The catalysed reaction is 1-hexadecanoyl-2-(9Z-octadecenoyl)-sn-glycero-3-phosphocholine + H2O = 2-(9Z-octadecenoyl)-sn-glycero-3-phosphocholine + hexadecanoate + H(+). It carries out the reaction 1-hexadecanoyl-2-(9Z,12Z-octadecadienoyl)-sn-glycero-3-phosphocholine + H2O = (9Z,12Z)-octadecadienoate + 1-hexadecanoyl-sn-glycero-3-phosphocholine + H(+). It catalyses the reaction 1-hexadecanoyl-2-(5Z,8Z,11Z,14Z-eicosatetraenoyl)-sn-glycero-3-phosphocholine + H2O = 1-hexadecanoyl-sn-glycero-3-phosphocholine + (5Z,8Z,11Z,14Z)-eicosatetraenoate + H(+). The enzyme catalyses 1-hexadecanoyl-2-(9Z,12Z-octadecadienoyl)-sn-glycero-3-phosphoethanolamine + H2O = 1-hexadecanoyl-sn-glycero-3-phosphoethanolamine + (9Z,12Z)-octadecadienoate + H(+). The catalysed reaction is 1-hexadecanoyl-2-(5Z,8Z,11Z,14Z-eicosatetraenoyl)-sn-glycero-3-phosphoethanolamine + H2O = 1-hexadecanoyl-sn-glycero-3-phosphoethanolamine + (5Z,8Z,11Z,14Z)-eicosatetraenoate + H(+). It carries out the reaction 1-(5Z,8Z,11Z,14Z-eicosatetraenoyl)-2-O-hexadecyl-sn-glycero-3-phosphocholine + H2O = 2-O-hexadecyl-sn-glycero-3-phosphocholine + (5Z,8Z,11Z,14Z)-eicosatetraenoate + H(+). It catalyses the reaction 1-O-hexadecyl-2-(5Z,8Z,11Z,14Z)-eicosatetraenoyl-sn-glycero-3-phosphocholine + H2O = 1-O-hexadecyl-sn-glycero-3-phosphocholine + (5Z,8Z,11Z,14Z)-eicosatetraenoate + H(+). The enzyme catalyses 1-hexadecanoyl-sn-glycero-3-phosphocholine + H2O = sn-glycerol 3-phosphocholine + hexadecanoate + H(+). Stimulated by cytosolic Ca(2+). Its function is as follows. Has calcium-dependent phospholipase and lysophospholipase activities with a potential role in membrane lipid remodeling and biosynthesis of lipid mediators. Preferentially hydrolyzes the ester bond of the fatty acyl group attached at sn-2 position of phospholipids (phospholipase A2 activity). Selectively hydrolyzes sn-2 arachidonoyl group from membrane phospholipids, providing the precursor for eicosanoid biosynthesis. In myocardial mitochondria, plays a major role in arachidonate release that is metabolically channeled to the formation of cardioprotective eicosanoids, epoxyeicosatrienoates (EETs). In Homo sapiens (Human), this protein is Cytosolic phospholipase A2 zeta (PLA2G4F).